An 802-amino-acid polypeptide reads, in one-letter code: LPS-assembly protein LptD (802 aa).

The first 29 residues, 1-29 (MARLFSLKPLVLALGFCFGTHCAAADAVA), serve as a signal peptide directing secretion.

The protein belongs to the LptD family. In terms of assembly, component of the lipopolysaccharide transport and assembly complex. Interacts with LptE and LptA.

Its subcellular location is the cell outer membrane. Together with LptE, is involved in the assembly of lipopolysaccharide (LPS) at the surface of the outer membrane. This is LPS-assembly protein LptD from Neisseria meningitidis serogroup A / serotype 4A (strain DSM 15465 / Z2491).